Consider the following 84-residue polypeptide: RNA-binding protein Hfq (84 aa).

Residues 9-69 form the Sm domain; sequence DRFLNILRTN…VSTIMPESFV (61 aa).

This sequence belongs to the Hfq family. In terms of assembly, homohexamer.

Its function is as follows. RNA chaperone that binds small regulatory RNA (sRNAs) and mRNAs to facilitate mRNA translational regulation in response to envelope stress, environmental stress and changes in metabolite concentrations. Also binds with high specificity to tRNAs. This Thermosipho africanus (strain TCF52B) protein is RNA-binding protein Hfq.